An 81-amino-acid chain; its full sequence is Sulfur carrier protein TusA (81 aa).

The Cysteine persulfide intermediate role is filled by cysteine 19.

Belongs to the sulfur carrier protein TusA family.

The protein localises to the cytoplasm. In terms of biological role, sulfur carrier protein which probably makes part of a sulfur-relay system. The chain is Sulfur carrier protein TusA from Shewanella baltica (strain OS223).